Here is a 471-residue protein sequence, read N- to C-terminus: Coagulation factor IX (471 aa).

Residues 1–28 (MKHLNTVMAESPALITIFLLGYLLSTEC) form the signal peptide. Positions 29 to 46 (AVFLDRENATKILTRPKR) are excised as a propeptide. Positions 47, 48, 53, 54, 61, 63, 66, 67, 72, 73, and 76 each coordinate Ca(2+). The 46-residue stretch at 47 to 92 (YNSGKLEEFVRGNLERECIEERCSFEEAREVFENTEKTTEFWKQYV) folds into the Gla domain. Residues Glu53, Glu54, Glu61, Glu63, Glu66, Glu67, Glu72, Glu73, Glu76, Glu79, and Glu82 each carry the 4-carboxyglutamate modification. Glu61 contributes to the Mg(2+) binding site. Cys64 and Cys69 are disulfide-bonded. A Mg(2+)-binding site is contributed by Glu66. Glu72 is a binding site for Mg(2+). Glu76 contributes to the Mg(2+) binding site. Glu82 serves as a coordination point for Ca(2+). Glu82 is a Mg(2+) binding site. An O-linked (GalNAc...) threonine glycan is attached at Thr85. The Ca(2+) site is built by Glu86, Asp93, Gly94, and Gln96. A 4-carboxyglutamate modification is found at Glu86. Residue Glu86 participates in Mg(2+) binding. One can recognise an EGF-like 1; calcium-binding domain in the interval 93–129 (DGDQCESNPCLNGGICKDDISSYECWCQVGFEGRNCE). 10 disulfide bridges follow: Cys97/Cys108, Cys102/Cys117, Cys119/Cys128, Cys134/Cys145, Cys141/Cys155, Cys157/Cys170, Cys178/Cys345, Cys262/Cys278, Cys392/Cys406, and Cys417/Cys445. O-linked (Glc...) serine glycosylation occurs at Ser99. Ca(2+) is bound by residues Asp110 and Asp111. Asp110 carries the post-translational modification (3R)-3-hydroxyaspartate. Phosphoserine is present on Ser114. The 42-residue stretch at 130-171 (LDATCNIKNGRCKQFCKNSPDNKVICSCTEGYQLAEDQKSCE) folds into the EGF-like 2 domain. Positions 193–236 (AETVFSNMDYENSTEAVFIQDDITDGAILNNVTESSESLNDFTR) are cleaved as a propeptide — activation peptide. Tyr202 carries the post-translational modification Sulfotyrosine. N-linked (GlcNAc...) asparagine glycosylation occurs at Asn204. Ser205 carries the phosphoserine modification. A Phosphothreonine; alternate modification is found at Thr206. Thr206 carries an O-linked (GalNAc...) threonine; alternate glycan. An N-linked (GlcNAc...) asparagine glycan is attached at Asn223. 2 O-linked (GalNAc...) threonine glycosylation sites follow: Thr225 and Thr235. The region spanning 237–469 (VVGGENAKPG…YVNWIKEKTK (233 aa)) is the Peptidase S1 domain. The active-site Charge relay system is the His277. Ca(2+) contacts are provided by Glu291, Asn293, Glu298, and Glu301. The Charge relay system role is filled by Asp325. Ser421 serves as the catalytic Charge relay system.

It belongs to the peptidase S1 family. In terms of assembly, heterodimer of a light chain and a heavy chain; disulfide-linked. Interacts (inactive and activated) with F11 (activated) in calcium-dependent manner. Interacts with SERPINC1. Activated by factor XIa, which excises the activation peptide. The propeptide can also be removed by snake venom protease. Activated by coagulation factor VIIa-tissue factor (F7-F3) complex in calcium-dependent manner. Post-translationally, the iron and 2-oxoglutarate dependent 3-hydroxylation of aspartate and asparagine is (R) stereospecific within EGF domains. In terms of processing, predominantly O-glucosylated at Ser-99 by POGLUT1 in vitro. As to expression, detected in liver.

Its subcellular location is the secreted. It catalyses the reaction Selective cleavage of Arg-|-Ile bond in factor X to form factor Xa.. In terms of biological role, factor IX is a vitamin K-dependent plasma protein that participates in the intrinsic pathway of blood coagulation by converting factor X to its active form in the presence of Ca(2+) ions, phospholipids, and factor VIIIa. The polypeptide is Coagulation factor IX (F9) (Mus musculus (Mouse)).